Reading from the N-terminus, the 89-residue chain is Large ribosomal subunit protein uL24 (89 aa).

Belongs to the universal ribosomal protein uL24 family. As to quaternary structure, part of the 50S ribosomal subunit.

In terms of biological role, one of two assembly initiator proteins, it binds directly to the 5'-end of the 23S rRNA, where it nucleates assembly of the 50S subunit. Its function is as follows. One of the proteins that surrounds the polypeptide exit tunnel on the outside of the subunit. This is Large ribosomal subunit protein uL24 from Oenococcus oeni (strain ATCC BAA-331 / PSU-1).